Reading from the N-terminus, the 418-residue chain is Actin-related protein 3-A (418 aa).

The protein belongs to the actin family. ARP3 subfamily. As to quaternary structure, component of the Arp2/3 complex composed of actr2/arp2, actr3/arp3, arpc1 (arpc1a or arpc1b), arpc2, arpc3, arpc4 and arpc5.

Its subcellular location is the cytoplasm. It is found in the cytoskeleton. The protein resides in the cell projection. It localises to the nucleus. Its function is as follows. ATP-binding component of the Arp2/3 complex, a multiprotein complex that mediates actin polymerization upon stimulation by nucleation-promoting factor (NPF). The Arp2/3 complex mediates the formation of branched actin networks in the cytoplasm, providing the force for cell motility. Seems to contact the pointed end of the daughter actin filament. In addition to its role in the cytoplasmic cytoskeleton, the Arp2/3 complex also promotes actin polymerization in the nucleus, thereby regulating gene transcription and repair of damaged DNA. The Arp2/3 complex promotes homologous recombination (HR) repair in response to DNA damage by promoting nuclear actin polymerization, leading to drive motility of double-strand breaks (DSBs). The polypeptide is Actin-related protein 3-A (Xenopus laevis (African clawed frog)).